The primary structure comprises 276 residues: Lectin-like protein At3g16530 (276 aa).

The first 19 residues, Met1–Ala19, serve as a signal peptide directing secretion. Positions Val20–Glu270 are legume-lectin like. Asn79, Asn129, and Asn196 each carry an N-linked (GlcNAc...) asparagine glycan.

It belongs to the leguminous lectin family.

It localises to the secreted. Its subcellular location is the extracellular space. It is found in the apoplast. The chain is Lectin-like protein At3g16530 from Arabidopsis thaliana (Mouse-ear cress).